Reading from the N-terminus, the 1010-residue chain is Pre-mRNA-splicing factor cwc22 (1010 aa).

Over residues 1 to 10 (MASADMSPSR) the composition is skewed to polar residues. Residues 1–166 (MASADMSPSR…RTPTPPPVAV (166 aa)) form a disordered region. Positions 18 to 28 (RSPSPRTQSPS) are enriched in low complexity. Basic and acidic residues-rich tracts occupy residues 29 to 39 (PRDEDGSRSPG) and 65 to 78 (PRRD…DQPH). Positions 84-109 (RSPTPRSQSPSRRSVRSPSPRQGSPA) are enriched in low complexity. Over residues 142-158 (RHRDAGGDYRPVRKERT) the composition is skewed to basic and acidic residues. In terms of domain architecture, MIF4G spans 222-405 (KKSVNGLVNK…EVLFQVRKDK (184 aa)). Residues 466-498 (GEASDDDEDDDDDDESESGSESEDEEQKALEIK) form a disordered region. The span at 468–491 (ASDDDEDDDDDDESESGSESEDEE) shows a compositional bias: acidic residues. The MI domain occupies 507-623 (NLRRTIYLSI…GWHVFSVIHL (117 aa)). A disordered region spans residues 708 to 1010 (LPAPPADSDS…SPVAKRGRVD (303 aa)). The span at 718 to 732 (ESVSSYSSYSSYSSR) shows a compositional bias: low complexity. Residues 753–775 (PPRRGRGRSYSRTPSRSRSRSRS) are compositionally biased toward basic residues. Low complexity predominate over residues 776–787 (YSRSVSKSVSRS). 2 stretches are compositionally biased toward basic residues: residues 834-846 (RRGR…RSRS) and 899-910 (RLRRGSYSRSRS). The span at 911–935 (RSPIPIRGNGPAGRDTGRAGPAPAR) shows a compositional bias: low complexity. Residues 936 to 948 (GGRRNRSYSRSRT) show a composition bias toward basic residues. A compositionally biased stretch (low complexity) spans 961 to 973 (SRRVVSRSPSPVV). A compositionally biased stretch (basic residues) spans 976–1010 (NKRRRSYSSSRSRSRSSSRSRYRSRSPVAKRGRVD).

Belongs to the CWC22 family. In terms of assembly, associated with the spliceosome.

The protein localises to the cytoplasm. It is found in the nucleus. In terms of biological role, involved in pre-mRNA splicing. The chain is Pre-mRNA-splicing factor cwc22 (msp-1) from Neurospora crassa (strain ATCC 24698 / 74-OR23-1A / CBS 708.71 / DSM 1257 / FGSC 987).